We begin with the raw amino-acid sequence, 84 residues long: DNA-directed RNA polymerase subunit Rpo5 (84 aa).

Belongs to the archaeal Rpo5/eukaryotic RPB5 RNA polymerase subunit family. Part of the RNA polymerase complex.

Its subcellular location is the cytoplasm. The enzyme catalyses RNA(n) + a ribonucleoside 5'-triphosphate = RNA(n+1) + diphosphate. DNA-dependent RNA polymerase (RNAP) catalyzes the transcription of DNA into RNA using the four ribonucleoside triphosphates as substrates. The polypeptide is DNA-directed RNA polymerase subunit Rpo5 (Sulfurisphaera tokodaii (strain DSM 16993 / JCM 10545 / NBRC 100140 / 7) (Sulfolobus tokodaii)).